Consider the following 421-residue polypeptide: 26S proteasome non-ATPase regulatory subunit 11A (421 aa).

Positions 227-391 (AYSYFYEAFE…GVLIVFDEPP (165 aa)) constitute a PCI domain.

This sequence belongs to the proteasome subunit S9 family. In terms of assembly, component of the lid subcomplex of the 19S proteasome regulatory particle complex (also named PA700 complex). The 26S proteasome consists of a 20S proteasome core and two 19S regulatory subunits.

It localises to the nucleus. The protein resides in the cytoplasm. The protein localises to the cytosol. Functionally, component of the lid subcomplex of the 26S proteasome, a multiprotein complex involved in the ATP-dependent degradation of ubiquitinated proteins. In the complex, psmd11a is required for proteasome assembly. This Danio rerio (Zebrafish) protein is 26S proteasome non-ATPase regulatory subunit 11A (psmd11a).